We begin with the raw amino-acid sequence, 474 residues long: Siroheme synthase (474 aa).

Residues 1-203 (MDYLPIFLKL…GRAEDAERVL (203 aa)) are precorrin-2 dehydrogenase /sirohydrochlorin ferrochelatase. Residues 22–23 (EV) and 43–44 (AS) contribute to the NAD(+) site. Residues 219–474 (GSVALVGAGP…QETEGRSGNG (256 aa)) form a uroporphyrinogen-III C-methyltransferase region. P228 is an S-adenosyl-L-methionine binding site. Catalysis depends on D251, which acts as the Proton acceptor. The active-site Proton donor is K273. S-adenosyl-L-methionine contacts are provided by residues 304 to 306 (GGD), I309, 334 to 335 (TA), M387, and G416.

This sequence in the N-terminal section; belongs to the precorrin-2 dehydrogenase / sirohydrochlorin ferrochelatase family. It in the C-terminal section; belongs to the precorrin methyltransferase family.

It carries out the reaction uroporphyrinogen III + 2 S-adenosyl-L-methionine = precorrin-2 + 2 S-adenosyl-L-homocysteine + H(+). The enzyme catalyses precorrin-2 + NAD(+) = sirohydrochlorin + NADH + 2 H(+). The catalysed reaction is siroheme + 2 H(+) = sirohydrochlorin + Fe(2+). It participates in cofactor biosynthesis; adenosylcobalamin biosynthesis; precorrin-2 from uroporphyrinogen III: step 1/1. The protein operates within cofactor biosynthesis; adenosylcobalamin biosynthesis; sirohydrochlorin from precorrin-2: step 1/1. It functions in the pathway porphyrin-containing compound metabolism; siroheme biosynthesis; precorrin-2 from uroporphyrinogen III: step 1/1. Its pathway is porphyrin-containing compound metabolism; siroheme biosynthesis; siroheme from sirohydrochlorin: step 1/1. It participates in porphyrin-containing compound metabolism; siroheme biosynthesis; sirohydrochlorin from precorrin-2: step 1/1. Its function is as follows. Multifunctional enzyme that catalyzes the SAM-dependent methylations of uroporphyrinogen III at position C-2 and C-7 to form precorrin-2 via precorrin-1. Then it catalyzes the NAD-dependent ring dehydrogenation of precorrin-2 to yield sirohydrochlorin. Finally, it catalyzes the ferrochelation of sirohydrochlorin to yield siroheme. In Methylococcus capsulatus (strain ATCC 33009 / NCIMB 11132 / Bath), this protein is Siroheme synthase.